A 558-amino-acid polypeptide reads, in one-letter code: Laccase-4 (558 aa).

The first 24 residues, 1-24 (MGSHMVWFLFLVSFFSVFPAPSES), serve as a signal peptide directing secretion. Plastocyanin-like domains follow at residues 32 to 148 (NVVM…PKRG) and 158 to 308 (NEKV…YSGT). N-linked (GlcNAc...) asparagine glycosylation is found at asparagine 37 and asparagine 78. Histidine 82 and histidine 84 together coordinate Cu cation. Asparagine 114 is a glycosylation site (N-linked (GlcNAc...) asparagine). The Cu cation site is built by histidine 127 and histidine 129. Asparagine 187, asparagine 296, asparagine 323, asparagine 330, asparagine 373, asparagine 383, asparagine 400, asparagine 418, and asparagine 441 each carry an N-linked (GlcNAc...) asparagine glycan. Positions 408–542 (DFPKNPPHVF…KMAFLVENGK (135 aa)) constitute a Plastocyanin-like 3 domain. Cu cation is bound by residues histidine 459, histidine 462, and histidine 464. Asparagine 479 is a glycosylation site (N-linked (GlcNAc...) asparagine). Cu cation is bound by residues histidine 521, cysteine 522, histidine 523, and histidine 527. Asparagine 545 is a glycosylation site (N-linked (GlcNAc...) asparagine).

It belongs to the multicopper oxidase family. The cofactor is Cu cation. Ubiquitous, with higher levels in the inflorescence stem.

It localises to the secreted. Its subcellular location is the extracellular space. The protein resides in the apoplast. The enzyme catalyses 4 hydroquinone + O2 = 4 benzosemiquinone + 2 H2O. Its function is as follows. Lignin degradation and detoxification of lignin-derived products. Required for secondary xylem cell wall lignification. This chain is Laccase-4 (IRX12), found in Arabidopsis thaliana (Mouse-ear cress).